Consider the following 2297-residue polypeptide: Xin actin-binding repeat-containing protein 1 (2297 aa).

Residues 1-11 show a composition bias toward basic and acidic residues; sequence MAEVAKQKKAT. Positions 1–28 are disordered; it reads MAEVAKQKKATEAVCGDEDFPPPPPPLP. Xin repeat units lie at residues 104–119, 139–154, 169–184, 208–223, 248–263, 286–301, 323–338, 362–377, and 396–411; these read GEVQ…WTLD, GDVK…STFD, GDVR…QPLD, GDVT…KPLD, GDVK…DPCC, SDFK…QPLD, GGVD…QPLD, ADVH…QPLS, and GNVG…QPMD. Basic and acidic residues predominate over residues 433–442; the sequence is GEVQDKRMQF. The segment at 433–461 is disordered; sequence GEVQDKRMQFEKSTAGKTAGDSGNKVQND. Xin repeat units follow at residues 464 to 479, 494 to 509, 532 to 547, 570 to 585, 605 to 620, 638 to 653, 677 to 692, 715 to 730, 747 to 762, 779 to 794, 818 to 833, 856 to 871, 893 to 908, and 928 to 943; these read GDVK…LPLN, GDVK…TPLY, GNVQ…RPLD, DDTR…QPLD, SNVK…KPMD, ADVK…QPLD, VNVK…EPLD, GDVS…KSLG, GSVH…QPIG, GDVG…LSLD, VNVK…QPLY, GDVR…KPLD, GDVK…QPLD, and KCVQ…EQAS. The residue at position 952 (Ser952) is a Phosphoserine. Xin repeat units follow at residues 959-974, 997-1012, and 1033-1048; these read GDVR…QPID, GDVK…QSLD, and ADVK…TPLD. Disordered regions lie at residues 1617-1680, 1866-1900, 2147-2191, and 2243-2297; these read PSSH…KDQK, KENI…VPSI, SAAR…PRRK, and ELSS…TEKH. Composition is skewed to low complexity over residues 1618–1630 and 1644–1656; these read SSHT…VSVT and SVSS…KNSS. Composition is skewed to basic and acidic residues over residues 1876–1885 and 2151–2162; these read SNKDELHFTS and KPAESPTDKPKT. The span at 2166–2180 shows a compositional bias: low complexity; sequence QSNAGSSSSQNSSAS. Positions 2259 to 2278 are enriched in polar residues; it reads GMTSPVLQRSGQSFSSNSLS.

Belongs to the Xin family. Expressed at intercalated disks in the heart (at protein level).

It localises to the cell junction. Its subcellular location is the adherens junction. It is found in the desmosome. In terms of biological role, positively regulates organization of the outer plexiform layer and Muller glia cells in the retina. May protect actin filaments from depolymerization. May play a role in development of normal skeletal muscle morphology and muscle fiber type composition. The chain is Xin actin-binding repeat-containing protein 1 from Danio rerio (Zebrafish).